Here is a 302-residue protein sequence, read N- to C-terminus: Glutaminase (302 aa).

Ser61, Asn111, Glu155, Asn162, Tyr186, Tyr238, and Val256 together coordinate substrate.

This sequence belongs to the glutaminase family. Homotetramer.

It carries out the reaction L-glutamine + H2O = L-glutamate + NH4(+). The protein is Glutaminase of Pseudomonas fluorescens (strain SBW25).